The primary structure comprises 247 residues: Uridylate kinase (247 aa).

An ATP-binding site is contributed by 17 to 20 (KFSG). Position 59 (Gly59) interacts with UMP. ATP-binding residues include Gly60 and Arg64. UMP is bound by residues Asp79 and 140 to 147 (TGNPFFTT). Residues Thr167, Tyr173, and Asp176 each contribute to the ATP site.

The protein belongs to the UMP kinase family. Homohexamer.

It is found in the cytoplasm. It carries out the reaction UMP + ATP = UDP + ADP. Its pathway is pyrimidine metabolism; CTP biosynthesis via de novo pathway; UDP from UMP (UMPK route): step 1/1. With respect to regulation, inhibited by UTP. Catalyzes the reversible phosphorylation of UMP to UDP. This Legionella pneumophila (strain Paris) protein is Uridylate kinase.